The primary structure comprises 264 residues: Thymidylate synthase (264 aa).

Residue arginine 21 coordinates dUMP. Histidine 51 provides a ligand contact to (6R)-5,10-methylene-5,6,7,8-tetrahydrofolate. 126–127 (RR) is a binding site for dUMP. Catalysis depends on cysteine 146, which acts as the Nucleophile. DUMP is bound by residues 166–169 (RSVD), asparagine 177, and 207–209 (HLY). Residue aspartate 169 coordinates (6R)-5,10-methylene-5,6,7,8-tetrahydrofolate. Alanine 263 contacts (6R)-5,10-methylene-5,6,7,8-tetrahydrofolate.

Belongs to the thymidylate synthase family. Bacterial-type ThyA subfamily. Homodimer.

It is found in the cytoplasm. It carries out the reaction dUMP + (6R)-5,10-methylene-5,6,7,8-tetrahydrofolate = 7,8-dihydrofolate + dTMP. It participates in pyrimidine metabolism; dTTP biosynthesis. Functionally, catalyzes the reductive methylation of 2'-deoxyuridine-5'-monophosphate (dUMP) to 2'-deoxythymidine-5'-monophosphate (dTMP) while utilizing 5,10-methylenetetrahydrofolate (mTHF) as the methyl donor and reductant in the reaction, yielding dihydrofolate (DHF) as a by-product. This enzymatic reaction provides an intracellular de novo source of dTMP, an essential precursor for DNA biosynthesis. The sequence is that of Thymidylate synthase from Geobacillus thermodenitrificans (strain NG80-2).